Consider the following 443-residue polypeptide: Thymidine phosphorylase (443 aa).

The protein belongs to the thymidine/pyrimidine-nucleoside phosphorylase family. As to quaternary structure, homodimer.

It catalyses the reaction thymidine + phosphate = 2-deoxy-alpha-D-ribose 1-phosphate + thymine. The protein operates within pyrimidine metabolism; dTMP biosynthesis via salvage pathway; dTMP from thymine: step 1/2. The enzymes which catalyze the reversible phosphorolysis of pyrimidine nucleosides are involved in the degradation of these compounds and in their utilization as carbon and energy sources, or in the rescue of pyrimidine bases for nucleotide synthesis. The chain is Thymidine phosphorylase from Shewanella baltica (strain OS185).